Here is a 340-residue protein sequence, read N- to C-terminus: Ribonucleoside-diphosphate reductase small subunit (340 aa).

Residues 180–200 (FILMILIEGIFFAASFAAIAY) traverse the membrane as a helical segment.

It belongs to the ribonucleoside diphosphate reductase small chain family. As to quaternary structure, heterotetramer composed of a homodimer of the large subunit (R1) and a homodimer of the small subunit (R2). Larger multisubunit protein complex are also active, composed of (R1)n(R2)n. The cofactor is Fe cation.

Its subcellular location is the host membrane. It catalyses the reaction a 2'-deoxyribonucleoside 5'-diphosphate + [thioredoxin]-disulfide + H2O = a ribonucleoside 5'-diphosphate + [thioredoxin]-dithiol. Functionally, ribonucleoside-diphosphate reductase holoenzyme provides the precursors necessary for viral DNA synthesis. Allows virus growth in non-dividing cells, as well as reactivation from latency in infected hosts. Catalyzes the biosynthesis of deoxyribonucleotides from the corresponding ribonucleotides. In Human herpesvirus 1 (strain 17) (HHV-1), this protein is Ribonucleoside-diphosphate reductase small subunit.